A 464-amino-acid chain; its full sequence is UPF0210 protein MA_1691 (464 aa).

Belongs to the UPF0210 family.

The polypeptide is UPF0210 protein MA_1691 (Methanosarcina acetivorans (strain ATCC 35395 / DSM 2834 / JCM 12185 / C2A)).